Here is a 138-residue protein sequence, read N- to C-terminus: MLKEFREFAMKGNVVDLAVGVIIGAAFGAIVSSLVGDVIMPVIGAITGGLDFSNYFIGLSKEVTATNLVDAKKQGAVLAYGSFLTVTLNFLIIAFVLFIVIRLINRIKRSEEAKPAEAPAPTKDQVLLTEIRDILKTK.

The next 3 helical transmembrane spans lie at 19 to 39 (VGVI…GDVI), 40 to 60 (MPVI…IGLS), and 81 to 101 (GSFL…FIVI).

The protein belongs to the MscL family. In terms of assembly, homopentamer.

The protein localises to the cell inner membrane. Functionally, channel that opens in response to stretch forces in the membrane lipid bilayer. May participate in the regulation of osmotic pressure changes within the cell. The protein is Large-conductance mechanosensitive channel of Afipia carboxidovorans (strain ATCC 49405 / DSM 1227 / KCTC 32145 / OM5) (Oligotropha carboxidovorans).